Reading from the N-terminus, the 109-residue chain is uncharacterized protein (109 aa).

The tract at residues 1-26 (MTPRSLPRYGNSSRRKSFPMHRPSNV) is disordered.

This is an uncharacterized protein from Mycobacterium bovis (strain ATCC BAA-935 / AF2122/97).